The chain runs to 118 residues: NADH-ubiquinone oxidoreductase chain 3 (118 aa).

The next 3 helical transmembrane spans lie at 6 to 26 (IFVY…VSFL), 62 to 82 (LVSI…PWAV), and 87 to 107 (IGLF…IGFV).

Belongs to the complex I subunit 3 family.

The protein localises to the mitochondrion membrane. The catalysed reaction is a ubiquinone + NADH + 5 H(+)(in) = a ubiquinol + NAD(+) + 4 H(+)(out). In terms of biological role, core subunit of the mitochondrial membrane respiratory chain NADH dehydrogenase (Complex I) that is believed to belong to the minimal assembly required for catalysis. Complex I functions in the transfer of electrons from NADH to the respiratory chain. The immediate electron acceptor for the enzyme is believed to be ubiquinone. The chain is NADH-ubiquinone oxidoreductase chain 3 (ND3) from Marchantia polymorpha (Common liverwort).